The primary structure comprises 480 residues: Glucosylglycerol phosphorylase (480 aa).

The Nucleophile role is filled by aspartate 190. Position 194 (tyrosine 194) interacts with substrate. The Proton donor role is filled by glutamate 231. A substrate-binding site is contributed by glutamine 336.

It belongs to the glycosyl hydrolase 13 family. Sucrose phosphorylase subfamily.

It catalyses the reaction 2-O-(alpha-D-glucopyranosyl)glycerol + phosphate = alpha-D-glucose 1-phosphate + glycerol. In terms of biological role, catalyzes the reversible phosphorolysis of 2-O-alpha-D-glucosylglycerol with retention of the anomeric configuration, forming alpha-D-glucose 1-phosphate and glycerol. Has most likely a catabolic role, either regulating the intracellular levels of glucosylglycerol, which acts as a compatible solute, or degrading it when the environmental conditions change. Cannot catalyze the phosphorolysis of sucrose or glucosylglycerate. This Marinobacter adhaerens (strain DSM 23420 / HP15) protein is Glucosylglycerol phosphorylase.